The following is a 281-amino-acid chain: uncharacterized protein (281 aa).

Positions 242–281 form a coiled coil; that stretch reads IDKQSRKKNIIREINDIKSKINDLSNYMDNLISELDDLFD.

This is an uncharacterized protein from Acanthamoeba polyphaga (Amoeba).